The sequence spans 147 residues: Hemoglobin subunit beta (147 aa).

At Val2 the chain carries N-acetylvaline. Positions 3–147 constitute a Globin domain; that stretch reads NLSGDEKNAV…VANALAHRYH (145 aa). Ser45 carries the post-translational modification Phosphoserine. At Lys60 the chain carries N6-acetyllysine. His64 is a binding site for heme b. Lys83 carries the N6-acetyllysine modification. His93 is a binding site for heme b. Cys94 is subject to S-nitrosocysteine.

Belongs to the globin family. As to quaternary structure, heterotetramer of two alpha chains and two beta chains. As to expression, red blood cells.

In terms of biological role, involved in oxygen transport from the lung to the various peripheral tissues. This is Hemoglobin subunit beta (HBB) from Vicugna pacos (Alpaca).